A 714-amino-acid polypeptide reads, in one-letter code: RanBP-type and C3HC4-type zinc finger-containing protein 1 (714 aa).

Disordered stretches follow at residues 1–23 (MSLSSGGWTRASPPAQSSSSHLG) and 152–172 (SSSTEEGRLPPPPLATQSKAP). Residues 14-23 (PAQSSSSHLG) show a composition bias toward polar residues. Residues 225 to 301 (LAVVVEDASS…TAFLYLISAR (77 aa)) form the Ubiquitin-like domain. Residues 394–426 (RTSIQPGWACPTCTYINKPTRPGCEMCSADRPE) form a RanBP2-type zinc finger. The segment at 482-710 (ERVECRICYV…VNKQRCHPKC (229 aa)) is TRIAD supradomain. 18 residues coordinate Zn(2+): Cys486, Cys489, Cys504, His506, Cys509, Cys512, Cys527, Cys536, Cys575, Cys580, Cys595, Cys598, Cys603, Cys606, His610, Cys615, Cys651, and Cys654. The RING-type 1 zinc finger occupies 486 to 536 (CRICYVELESGEGVLLRECLHCFCKECLRSVILMSEDPQVACPYRDESYAC). The IBR-type zinc finger occupies 555 to 615 (QHWLQRGLSV…CKAIHEGMNC (61 aa)). Residues 651-680 (CPQCGIIVQKKEGCDWLRCTVCHTEICWVT) form an RING-type 2; atypical zinc finger. Cys664 is an active-site residue. Residues Cys669 and Cys672 each contribute to the Zn(2+) site.

Belongs to the RBR family. Component of the LUBAC complex (linear ubiquitin chain assembly complex).

The catalysed reaction is [E2 ubiquitin-conjugating enzyme]-S-ubiquitinyl-L-cysteine + [acceptor protein]-L-lysine = [E2 ubiquitin-conjugating enzyme]-L-cysteine + [acceptor protein]-N(6)-ubiquitinyl-L-lysine.. It participates in protein modification; protein ubiquitination. Component of the LUBAC complex which conjugates linear ('Met-1'-linked) polyubiquitin chains to substrates and plays a key role in NF-kappa-B activation and regulation of inflammation. LUBAC conjugates linear polyubiquitin to ikbkg and RIPK1 and is involved in activation of the canonical NF-kappa-B and the JNK signaling pathways. Linear ubiquitination mediated by the LUBAC complex interferes with TNF-induced cell death and thereby prevents inflammation. LUBAC is recruited to the TNF-R1 signaling complex (TNF-RSC) to conjugate linear polyubiquitin to ikbkg and possibly other components contributing to the stability of the complex. The LUBAC complex is also involved in innate immunity by conjugating linear polyubiquitin chains at the surface of bacteria invading the cytosol to form the ubiquitin coat surrounding bacteria. LUBAC is not able to initiate formation of the bacterial ubiquitin coat, and can only promote formation of linear polyubiquitins on pre-existing ubiquitin. The bacterial ubiquitin coat acts as an 'eat-me' signal for xenophagy and promotes NF-kappa-B activation. Binds polyubiquitin of different linkage types. The sequence is that of RanBP-type and C3HC4-type zinc finger-containing protein 1 (rbck1) from Danio rerio (Zebrafish).